We begin with the raw amino-acid sequence, 195 residues long: PAP fimbrial minor pilin protein (195 aa).

The first 22 residues, 1-22 (MRLRFSVPLFFFGCVFVHGVFA), serve as a signal peptide directing secretion. Cysteine 58 and cysteine 97 are oxidised to a cystine.

The protein belongs to the fimbrial protein family.

The protein resides in the secreted. It is found in the fimbrium. In terms of biological role, fimbriae (also called pili), polar filaments radiating from the surface of the bacterium to a length of 0.5-1.5 micrometers and numbering 100-300 per cell, enable bacteria to colonize the epithelium of specific host organs. Functionally, papH seems to anchor the pilus to the bacterial cell. In addition the stoichiometric relationship between PapH and PapA determines the pilus length. This is PAP fimbrial minor pilin protein (papH) from Escherichia coli.